The primary structure comprises 218 residues: Recombination protein RecR (218 aa).

Residues 56–71 (CRICCNISRDEVCRIC) form a C4-type zinc finger. The Toprim domain occupies 79–195 (GLICVVEEPK…VVSRLASGMP (117 aa)).

This sequence belongs to the RecR family.

Its function is as follows. May play a role in DNA repair. It seems to be involved in an RecBC-independent recombinational process of DNA repair. It may act with RecF and RecO. This is Recombination protein RecR from Corynebacterium efficiens (strain DSM 44549 / YS-314 / AJ 12310 / JCM 11189 / NBRC 100395).